The following is a 647-amino-acid chain: Starch synthase 1, chloroplastic/amyloplastic (647 aa).

A chloroplast-targeting transit peptide spans 1–41 (MAATGVGAGCLAPSVRLRADPATAARASACVVRARLRRVAR). Pro residues predominate over residues 66 to 91 (PLVPGFLAPPPPAPAQSPAPTQPPLP). The segment at 66–95 (PLVPGFLAPPPPAPAQSPAPTQPPLPDAGV) is disordered. Lys153 lines the ADP-alpha-D-glucose pocket.

It belongs to the glycosyltransferase 1 family. Bacterial/plant glycogen synthase subfamily.

The protein localises to the plastid. It is found in the chloroplast. The protein resides in the amyloplast. It carries out the reaction [(1-&gt;4)-alpha-D-glucosyl](n) + ADP-alpha-D-glucose = [(1-&gt;4)-alpha-D-glucosyl](n+1) + ADP + H(+). It functions in the pathway glycan biosynthesis; starch biosynthesis. This chain is Starch synthase 1, chloroplastic/amyloplastic (WSSI-2), found in Triticum aestivum (Wheat).